Here is a 342-residue protein sequence, read N- to C-terminus: Organic solute transporter alpha-like protein 2 (342 aa).

Residues 1–50 are Extracellular-facing; sequence MLEISPWETLVKLLTDSLLNCTGTHEDVPHAKTFLRSLTTTYIASLAVAT. Asparagine 20 carries an N-linked (GlcNAc...) asparagine glycan. The helical transmembrane segment at 51 to 71 threads the bilayer; that stretch reads AVTVGTVCLAVLHLIYIHFYI. At 72-79 the chain is on the cytoplasmic side; that stretch reads THSSRRLH. A helical transmembrane segment spans residues 80–100; it reads IVLLACTAPLVSLLALVAMYM. Topologically, residues 101–109 are extracellular; it reads PRVWFLSHL. Residues 110–130 traverse the membrane as a helical segment; that stretch reads LSFLYFSFALWVIICLLLHIF. Residues 131 to 176 are Cytoplasmic-facing; sequence DGHHALVTKMMQRLQYVEIATPPFCCLFPCLPKVRLEGKKIRWCEL. A helical membrane pass occupies residues 177–197; it reads MVMQAPIVRLFATLVSLVIYF. The Extracellular portion of the chain corresponds to 198–208; that stretch reads EYQDQGLVPLK. The helical transmembrane segment at 209–229 threads the bilayer; sequence VLDFITLPSLLAGIYGTHILV. The Cytoplasmic portion of the chain corresponds to 230-243; it reads TTVSRMDELISYRY. Residues 244–264 form a helical membrane-spanning segment; sequence VVVFRLLDFFFMVFGLQQPVF. Topologically, residues 265–290 are extracellular; the sequence is DFLARYGAFGCGTVLPAIETSFYWKN. The chain crosses the membrane as a helical span at residues 291-311; it reads FFTVIEAFCVTLISTVLLQPS. Topologically, residues 312–342 are cytoplasmic; sequence KSSFFDKHPSCRSMSSARSTITDVDTDESTT.

It belongs to the OST-alpha family.

The protein localises to the cell membrane. Probable transporter. The protein is Organic solute transporter alpha-like protein 2 (osta-2) of Caenorhabditis elegans.